A 291-amino-acid chain; its full sequence is ATP phosphoribosyltransferase (291 aa).

This sequence belongs to the ATP phosphoribosyltransferase family. Long subfamily. The cofactor is Mg(2+).

Its subcellular location is the cytoplasm. The catalysed reaction is 1-(5-phospho-beta-D-ribosyl)-ATP + diphosphate = 5-phospho-alpha-D-ribose 1-diphosphate + ATP. Its pathway is amino-acid biosynthesis; L-histidine biosynthesis; L-histidine from 5-phospho-alpha-D-ribose 1-diphosphate: step 1/9. With respect to regulation, feedback inhibited by histidine. In terms of biological role, catalyzes the condensation of ATP and 5-phosphoribose 1-diphosphate to form N'-(5'-phosphoribosyl)-ATP (PR-ATP). Has a crucial role in the pathway because the rate of histidine biosynthesis seems to be controlled primarily by regulation of HisG enzymatic activity. The chain is ATP phosphoribosyltransferase from Trichlorobacter lovleyi (strain ATCC BAA-1151 / DSM 17278 / SZ) (Geobacter lovleyi).